Consider the following 455-residue polypeptide: Bifunctional protein GlmU (455 aa).

The pyrophosphorylase stretch occupies residues 1-226 (MGLSVVILAA…EFEILGVNDR (226 aa)). UDP-N-acetyl-alpha-D-glucosamine is bound by residues 8 to 11 (LAAG), Lys-22, Gln-73, 78 to 79 (GT), 99 to 101 (YGD), Gly-136, Glu-151, Asn-166, and Asn-224. Asp-101 contacts Mg(2+). Asn-224 serves as a coordination point for Mg(2+). The interval 227 to 247 (TQLASLERVWQRNVAEKIMAK) is linker. Residues 248–455 (GVSIADPNRF…WQRSVKKTDK (208 aa)) are N-acetyltransferase. Residues Arg-330 and Lys-348 each contribute to the UDP-N-acetyl-alpha-D-glucosamine site. Residue His-360 is the Proton acceptor of the active site. UDP-N-acetyl-alpha-D-glucosamine contacts are provided by Tyr-363 and Asn-374. Acetyl-CoA-binding positions include Ala-377, 383–384 (NY), Ser-402, Ala-420, and Arg-437.

This sequence in the N-terminal section; belongs to the N-acetylglucosamine-1-phosphate uridyltransferase family. The protein in the C-terminal section; belongs to the transferase hexapeptide repeat family. In terms of assembly, homotrimer. Mg(2+) is required as a cofactor.

It localises to the cytoplasm. It catalyses the reaction alpha-D-glucosamine 1-phosphate + acetyl-CoA = N-acetyl-alpha-D-glucosamine 1-phosphate + CoA + H(+). The enzyme catalyses N-acetyl-alpha-D-glucosamine 1-phosphate + UTP + H(+) = UDP-N-acetyl-alpha-D-glucosamine + diphosphate. Its pathway is nucleotide-sugar biosynthesis; UDP-N-acetyl-alpha-D-glucosamine biosynthesis; N-acetyl-alpha-D-glucosamine 1-phosphate from alpha-D-glucosamine 6-phosphate (route II): step 2/2. It functions in the pathway nucleotide-sugar biosynthesis; UDP-N-acetyl-alpha-D-glucosamine biosynthesis; UDP-N-acetyl-alpha-D-glucosamine from N-acetyl-alpha-D-glucosamine 1-phosphate: step 1/1. The protein operates within bacterial outer membrane biogenesis; LPS lipid A biosynthesis. In terms of biological role, catalyzes the last two sequential reactions in the de novo biosynthetic pathway for UDP-N-acetylglucosamine (UDP-GlcNAc). The C-terminal domain catalyzes the transfer of acetyl group from acetyl coenzyme A to glucosamine-1-phosphate (GlcN-1-P) to produce N-acetylglucosamine-1-phosphate (GlcNAc-1-P), which is converted into UDP-GlcNAc by the transfer of uridine 5-monophosphate (from uridine 5-triphosphate), a reaction catalyzed by the N-terminal domain. The polypeptide is Bifunctional protein GlmU (Francisella tularensis subsp. holarctica (strain OSU18)).